Consider the following 748-residue polypeptide: Pleckstrin homology domain-containing family M member 3 (748 aa).

2 disordered regions span residues 88–107 and 129–187; these read HAKE…PLLS and NDSL…RNKN. Composition is skewed to basic and acidic residues over residues 129-140 and 148-159; these read NDSLDHLEDAPK and SRSDVSHIDWKN. Positions 167-180 are enriched in polar residues; that stretch reads QRSSSQGMHCTSPF. 2 PH domains span residues 200–297 and 348–443; these read NILK…EAIC and NIIK…SAAN. The Phorbol-ester/DAG-type zinc-finger motif lies at 656-709; the sequence is SHVYSCSLCSQKGFICEICNNGEILYPFEENSTSRCENCGAVFHSDCKVRTVPC.

The protein resides in the cytoplasm. Its subcellular location is the golgi apparatus. It is found in the cell membrane. May play a role during muscle differentiation. This is Pleckstrin homology domain-containing family M member 3 (plekhm3) from Xenopus laevis (African clawed frog).